The sequence spans 156 residues: ATP synthase subunit b (156 aa).

A helical membrane pass occupies residues 3–23 (ITFTIFAQSIAFAALIWIVAT).

This sequence belongs to the ATPase B chain family. F-type ATPases have 2 components, F(1) - the catalytic core - and F(0) - the membrane proton channel. F(1) has five subunits: alpha(3), beta(3), gamma(1), delta(1), epsilon(1). F(0) has three main subunits: a(1), b(2) and c(10-14). The alpha and beta chains form an alternating ring which encloses part of the gamma chain. F(1) is attached to F(0) by a central stalk formed by the gamma and epsilon chains, while a peripheral stalk is formed by the delta and b chains.

It localises to the cell inner membrane. Its function is as follows. F(1)F(0) ATP synthase produces ATP from ADP in the presence of a proton or sodium gradient. F-type ATPases consist of two structural domains, F(1) containing the extramembraneous catalytic core and F(0) containing the membrane proton channel, linked together by a central stalk and a peripheral stalk. During catalysis, ATP synthesis in the catalytic domain of F(1) is coupled via a rotary mechanism of the central stalk subunits to proton translocation. Functionally, component of the F(0) channel, it forms part of the peripheral stalk, linking F(1) to F(0). This chain is ATP synthase subunit b, found in Xylella fastidiosa (strain M12).